An 832-amino-acid polypeptide reads, in one-letter code: Mucosa-associated lymphoid tissue lymphoma translocation protein 1 homolog (832 aa).

Residues 1 to 39 (MSLWGQPLQASPPLAVRQPPTASSGPSTSPPAGATLNRL) form a disordered region. The residue at position 2 (S2) is an N-acetylserine. The span at 19–39 (PPTASSGPSTSPPAGATLNRL) shows a compositional bias: low complexity. The Death domain occupies 45 to 132 (RRLSESLDRA…EVLPLLNPPG (88 aa)). Ig-like C2-type domains follow at residues 131-207 (PGLK…FEFS) and 218-314 (AEVT…KKAE). A Phosphoserine modification is found at S141. Disulfide bonds link C154–C196 and C257–C299. Residues 356 to 570 (IGNMSYWEHP…SLSEKRALTD (215 aa)) form a caspase-like region. Positions 377–384 (LTNLLRQL) match the Nuclear export signal motif. Catalysis depends on residues H423 and C472.

Belongs to the peptidase C14B family. Homooligomer; forms oligomers which bind to TRAF6. Forms a complex with CARD14 and MALT1; resulting in the formation of a CBM (CARD14-BCL10-MALT1) complex. Forms a complex with CARD11 and MALT1; resulting in the formation of a CBM (CARD11-BCL10-MALT1) complex. Forms a complex with CARD9 and MALT1; resulting in the formation of a CBM (CARD9-BCL10-MALT1) complex.

The protein localises to the cytoplasm. It localises to the perinuclear region. It is found in the nucleus. Its function is as follows. Protease that enhances BCL10-induced activation: acts via formation of CBM complexes that channel adaptive and innate immune signaling downstream of CARD domain-containing proteins (CARD9, CARD11 and CARD14) to activate NF-kappa-B and MAP kinase p38 pathways which stimulate expression of genes encoding pro-inflammatory cytokines and chemokines. Mediates BCL10 cleavage: MALT1-dependent BCL10 cleavage plays an important role in T-cell antigen receptor-induced integrin adhesion. Involved in the induction of T helper 17 cells (Th17) differentiation. Cleaves RC3H1 and ZC3H12A in response to T-cell receptor (TCR) stimulation which releases their cooperatively repressed targets to promote Th17 cell differentiation. Also mediates cleavage of N4BP1 in T-cells following TCR-mediated activation, leading to N4BP1 inactivation. May also have ubiquitin ligase activity: binds to TRAF6, inducing TRAF6 oligomerization and activation of its ligase activity. The polypeptide is Mucosa-associated lymphoid tissue lymphoma translocation protein 1 homolog (Mus musculus (Mouse)).